A 148-amino-acid polypeptide reads, in one-letter code: Large ribosomal subunit protein uL15A (148 aa).

2 stretches are compositionally biased toward basic residues: residues Met-1 to Gly-13 and Arg-21 to Gly-31. Residues Met-1–Gly-36 are disordered.

The protein belongs to the universal ribosomal protein uL15 family. Component of the large ribosomal subunit (LSU). Mature yeast ribosomes consist of a small (40S) and a large (60S) subunit. The 40S small subunit contains 1 molecule of ribosomal RNA (18S rRNA) and at least 33 different proteins. The large 60S subunit contains 3 rRNA molecules (25S, 5.8S and 5S rRNA) and at least 46 different proteins.

It localises to the cytoplasm. Its function is as follows. Component of the ribosome, a large ribonucleoprotein complex responsible for the synthesis of proteins in the cell. The small ribosomal subunit (SSU) binds messenger RNAs (mRNAs) and translates the encoded message by selecting cognate aminoacyl-transfer RNA (tRNA) molecules. The large subunit (LSU) contains the ribosomal catalytic site termed the peptidyl transferase center (PTC), which catalyzes the formation of peptide bonds, thereby polymerizing the amino acids delivered by tRNAs into a polypeptide chain. The nascent polypeptides leave the ribosome through a tunnel in the LSU and interact with protein factors that function in enzymatic processing, targeting, and the membrane insertion of nascent chains at the exit of the ribosomal tunnel. The protein is Large ribosomal subunit protein uL15A (rpl2802) of Schizosaccharomyces pombe (strain 972 / ATCC 24843) (Fission yeast).